The primary structure comprises 239 residues: Large ribosomal subunit protein uL3 (239 aa).

2 disordered regions span residues 140 to 166 (SHRS…PGHM) and 211 to 239 (PLPK…QEGA). Residue Gln151 is modified to N5-methylglutamine.

The protein belongs to the universal ribosomal protein uL3 family. In terms of assembly, part of the 50S ribosomal subunit. Forms a cluster with proteins L14 and L19. In terms of processing, methylated by PrmB.

One of the primary rRNA binding proteins, it binds directly near the 3'-end of the 23S rRNA, where it nucleates assembly of the 50S subunit. The protein is Large ribosomal subunit protein uL3 of Bradyrhizobium sp. (strain BTAi1 / ATCC BAA-1182).